Reading from the N-terminus, the 1728-residue chain is Nebulin-related-anchoring protein (1728 aa).

The LIM zinc-binding domain maps to 4–64 (QACSRCGYGV…HAHNPKNNTF (61 aa)). Nebulin repeat units lie at residues 173 to 200 (TPAY…ERVS), 201 to 235 (TFTP…QQRG), 244 to 271 (TPAY…REMK), 313 to 340 (TPAY…KMKG), 345 to 379 (HSLA…NSKG), 386 to 414 (ETPQ…TQLR), 416 to 450 (HYDG…HDVV), 484 to 518 (KFSS…RNKL), 519 to 553 (NYTL…KTKG), 555 to 589 (GFEM…KMKG), 599 to 623 (LLHS…ESKT), 624 to 658 (HFNL…DYTV), 659 to 689 (LPED…WMRG), 699 to 721 (NLEQ…RVDE), 723 to 757 (KFTS…QSVH), 758 to 792 (QYTI…KQKA), 794 to 828 (GFEL…RSRG), 841 to 866 (QMSH…DTRS), 867 to 893 (QCHI…VGYR), 898 to 932 (CFTA…WMKG), 943 to 960 (VEQA…KYRQ), 966 to 1000 (KFTS…NVKH), 1001 to 1035 (HYTQ…RLRD), 1037 to 1071 (GYKL…RMKG), 1075 to 1109 (GSRS…HAKA), 1110 to 1136 (HFHL…QDYR), 1141 to 1175 (QHTV…FMRG), 1180 to 1203 (VPGT…KYRQ), 1209 to 1243 (KYTA…DARH), 1244 to 1278 (QYTM…NLRA), 1280 to 1314 (GYKL…KERG), 1318 to 1352 (GVRN…SSQA), 1353 to 1379 (QCHL…HDYR), 1384 to 1418 (EFTA…GMKG), 1425 to 1446 (QSPQ…KYRK), 1452 to 1478 (KFTT…RLYR), 1487 to 1521 (RYTP…QSRA), 1523 to 1557 (GYDF…RDRG), 1561 to 1595 (GYRS…KGRS), 1596 to 1630 (QFHS…QHTS), and 1637 to 1661 (LKHA…LTRG). Residue Thr203 is modified to Phosphothreonine. Phosphoserine is present on Ser1078.

Interacts with actin, alpha-actinin, KLHL41, TLN1 and VCL. Interacts with CSRP3. In terms of tissue distribution, expressed in cardiac and skeletal muscle. Not detected in kidney, spleen, liver, brain, lung, stomach or uterus.

Functionally, may be involved in anchoring the terminal actin filaments in the myofibril to the membrane and in transmitting tension from the myofibrils to the extracellular matrix. This chain is Nebulin-related-anchoring protein, found in Mus musculus (Mouse).